The following is a 644-amino-acid chain: Transcription factor btd (644 aa).

2 disordered regions span residues 16 to 65 and 101 to 196; these read HQAQ…TQQQ and APPS…AGSP. 2 stretches are compositionally biased toward low complexity: residues 101–119 and 140–196; these read APPS…SSPL and ASPN…AGSP. C2H2-type zinc fingers lie at residues 333–357, 363–385, and 391–413; these read HICH…LRWH, FLCL…GRTH, and YACP…KKTH. 2 disordered regions span residues 437 to 461 and 478 to 537; these read LEKK…QPDT and TSAG…SSSA. 2 stretches are compositionally biased toward low complexity: residues 499-508 and 521-537; these read TTTTSSAAAS and AIQP…SSSA.

The protein localises to the nucleus. Required for the development of the antennal, intercalary and mandibular segments of the head. The polypeptide is Transcription factor btd (btd) (Drosophila melanogaster (Fruit fly)).